The primary structure comprises 345 residues: Olfactory receptor 11G2 (345 aa).

Topologically, residues 1–62 (MHFLSQNDLN…LGFPCPREGQ (62 aa)) are extracellular. N-linked (GlcNAc...) asparagine glycosylation is present at Asn43. The helical transmembrane segment at 63–83 (ILLFVLFTVVYLLTLMGNGSI) threads the bilayer. Residues 84-92 (ICAVHWDQR) are Cytoplasmic-facing. A helical membrane pass occupies residues 93-113 (LHAPMYILLANFSFLEICYVT). Residues 114–135 (STVPSMLANFLSDTKIISFSGC) are Extracellular-facing. A disulfide bond links Cys135 and Cys217. Residues 136-156 (FLQFYFFFSLGSTECFFLAVM) form a helical membrane-spanning segment. At 157-181 (AFDRYLAICRPLRYPTIMTRRLCTN) the chain is on the cytoplasmic side. The chain crosses the membrane as a helical span at residues 182 to 202 (LVVNCWVLGFIWFLIPIVNIS). The Extracellular segment spans residues 203 to 241 (QMSFCGSRIIDHFLCDPAPLLTLTCKKGPVIELVFSVLS). The chain crosses the membrane as a helical span at residues 242-264 (PLPVFMLFLFIVGSYALVVRAVL). Residues 265-275 (RVPSAAGRRKA) lie on the Cytoplasmic side of the membrane. Residues 276 to 296 (FSTCGSHLAVVSLFYGSVLVM) form a helical membrane-spanning segment. Residues 297–309 (YGSPPSKNEAGKQ) are Extracellular-facing. A helical transmembrane segment spans residues 310-330 (KTVTLFYSVVTPLLNPVIYSL). Residues 331 to 345 (RNKDMRKALKKFWGT) lie on the Cytoplasmic side of the membrane.

This sequence belongs to the G-protein coupled receptor 1 family.

Its subcellular location is the cell membrane. Odorant receptor. The chain is Olfactory receptor 11G2 (OR11G2) from Homo sapiens (Human).